The following is a 197-amino-acid chain: Protein tyrosine phosphatase receptor type C-associated protein (197 aa).

Residues 33–53 traverse the membrane as a helical segment; sequence VVTIVLLLLLLLLLVTALALA. Phosphoserine occurs at positions 99 and 103. Disordered regions lie at residues 120-164 and 177-197; these read GPEE…GSSA and SAAW…VTAL. Residues 124-145 are compositionally biased toward basic and acidic residues; the sequence is AAAKEEEQRCQAEQTRDPRDTD.

Interacts with CD45/PTPRC. Phosphorylated on tyrosine residues. In terms of tissue distribution, leukocyte-specific. Expressed in B- and T-cell lines, in spleen, thymus, and bone marrow of adult mice, and in embryos.

It is found in the membrane. In Mus musculus (Mouse), this protein is Protein tyrosine phosphatase receptor type C-associated protein (Ptprcap).